A 238-amino-acid chain; its full sequence is Thymidine kinase a (238 aa).

ATP contacts are provided by residues 38–45, 70–72, and 115–118; these read GPMFSGKS, DTR, and DEAQ. The active-site Proton acceptor is glutamate 116. Residue tyrosine 147 participates in substrate binding. Residues cysteine 172 and cysteine 175 each coordinate Zn(2+). Substrate contacts are provided by residues 191 to 195 and tyrosine 200; that span reads TELIG. Cysteine 204 contributes to the Zn(2+) binding site.

It belongs to the thymidine kinase family. As to quaternary structure, monomer and dimer. Dimerization is stimulated by ATP. In terms of tissue distribution, expressed ubiquitously.

The protein localises to the cytoplasm. It catalyses the reaction thymidine + ATP = dTMP + ADP + H(+). The protein operates within purine metabolism. It participates in pyrimidine metabolism. Functionally, part of the salvage pathway for purine and pyrimidine deoxyribonucleotide synthesis. Phosphorylates preferentially purines over pyrimidines. Mediates tolerance to genotoxins, such as ultraviolet-C (UV-C) irradiation, MMC, a DNA crosslinker, and ZEO, a DNA intercalator, that induce double-strand breaks and thus contributes to several DNA repair pathways by providing deoxythymidine triphosphate that serve as precursors for DNA repair and to balance deoxyribonucleotides pools. The sequence is that of Thymidine kinase a from Arabidopsis thaliana (Mouse-ear cress).